The primary structure comprises 308 residues: HTH-type transcriptional activator AllS (308 aa).

In terms of domain architecture, HTH lysR-type spans 2-59; it reads FDPETLRTFISVAETGSFSKAAERLCKTTATISYRIKLLEENTGVGLFFRTTRSVSLT. The H-T-H motif DNA-binding region spans 19–38; that stretch reads FSKAAERLCKTTATISYRIK.

It belongs to the LysR transcriptional regulatory family.

In terms of biological role, positive regulator essential for the expression of allD operon. Binds to the allD promoter. The polypeptide is HTH-type transcriptional activator AllS (allS) (Salmonella paratyphi A (strain ATCC 9150 / SARB42)).